A 122-amino-acid polypeptide reads, in one-letter code: NADH-quinone oxidoreductase subunit A (122 aa).

3 consecutive transmembrane segments (helical) span residues 10–30 (LIIF…LTAG), 67–87 (FALL…WAVV), and 91–111 (LGLF…IGLI).

It belongs to the complex I subunit 3 family. NDH-1 is composed of 14 different subunits. Subunits NuoA, H, J, K, L, M, N constitute the membrane sector of the complex.

The protein localises to the cell membrane. It carries out the reaction a quinone + NADH + 5 H(+)(in) = a quinol + NAD(+) + 4 H(+)(out). Its function is as follows. NDH-1 shuttles electrons from NADH, via FMN and iron-sulfur (Fe-S) centers, to quinones in the respiratory chain. The immediate electron acceptor for the enzyme in this species is believed to be a menaquinone. Couples the redox reaction to proton translocation (for every two electrons transferred, four hydrogen ions are translocated across the cytoplasmic membrane), and thus conserves the redox energy in a proton gradient. In Geobacillus kaustophilus (strain HTA426), this protein is NADH-quinone oxidoreductase subunit A.